Reading from the N-terminus, the 377-residue chain is Succinyl-diaminopimelate desuccinylase (377 aa).

Histidine 68 contributes to the Zn(2+) binding site. Aspartate 70 is an active-site residue. Aspartate 101 is a binding site for Zn(2+). Glutamate 135 acts as the Proton acceptor in catalysis. Zn(2+) is bound by residues glutamate 136, glutamate 164, and histidine 350.

Belongs to the peptidase M20A family. DapE subfamily. As to quaternary structure, homodimer. The cofactor is Zn(2+). Co(2+) is required as a cofactor.

It catalyses the reaction N-succinyl-(2S,6S)-2,6-diaminopimelate + H2O = (2S,6S)-2,6-diaminopimelate + succinate. Its pathway is amino-acid biosynthesis; L-lysine biosynthesis via DAP pathway; LL-2,6-diaminopimelate from (S)-tetrahydrodipicolinate (succinylase route): step 3/3. Its function is as follows. Catalyzes the hydrolysis of N-succinyl-L,L-diaminopimelic acid (SDAP), forming succinate and LL-2,6-diaminopimelate (DAP), an intermediate involved in the bacterial biosynthesis of lysine and meso-diaminopimelic acid, an essential component of bacterial cell walls. This chain is Succinyl-diaminopimelate desuccinylase, found in Acinetobacter baumannii (strain AB0057).